Reading from the N-terminus, the 164-residue chain is Ribosome maturation factor RimM (164 aa).

A PRC barrel domain is found at 90-161 (KGSYFIADLI…TVTIKPLEIW (72 aa)).

The protein belongs to the RimM family. Binds ribosomal protein uS19.

It localises to the cytoplasm. Its function is as follows. An accessory protein needed during the final step in the assembly of 30S ribosomal subunit, possibly for assembly of the head region. Essential for efficient processing of 16S rRNA. May be needed both before and after RbfA during the maturation of 16S rRNA. It has affinity for free ribosomal 30S subunits but not for 70S ribosomes. In Clostridium botulinum (strain Hall / ATCC 3502 / NCTC 13319 / Type A), this protein is Ribosome maturation factor RimM.